The primary structure comprises 482 residues: tRNA sulfurtransferase (482 aa).

Residues 61–165 enclose the THUMP domain; that stretch reads EQAIEALACI…GEELFIVSAI (105 aa). Residues 183-184, Lys265, Gly287, and Gln296 each bind ATP; that span reads LI. An intrachain disulfide couples Cys344 to Cys456. Positions 404-482 constitute a Rhodanese domain; the sequence is SGDNEVILDI…GFANVKVYRP (79 aa). Cys456 (cysteine persulfide intermediate) is an active-site residue.

Belongs to the ThiI family.

It is found in the cytoplasm. The catalysed reaction is [ThiI sulfur-carrier protein]-S-sulfanyl-L-cysteine + a uridine in tRNA + 2 reduced [2Fe-2S]-[ferredoxin] + ATP + H(+) = [ThiI sulfur-carrier protein]-L-cysteine + a 4-thiouridine in tRNA + 2 oxidized [2Fe-2S]-[ferredoxin] + AMP + diphosphate. It carries out the reaction [ThiS sulfur-carrier protein]-C-terminal Gly-Gly-AMP + S-sulfanyl-L-cysteinyl-[cysteine desulfurase] + AH2 = [ThiS sulfur-carrier protein]-C-terminal-Gly-aminoethanethioate + L-cysteinyl-[cysteine desulfurase] + A + AMP + 2 H(+). Its pathway is cofactor biosynthesis; thiamine diphosphate biosynthesis. In terms of biological role, catalyzes the ATP-dependent transfer of a sulfur to tRNA to produce 4-thiouridine in position 8 of tRNAs, which functions as a near-UV photosensor. Also catalyzes the transfer of sulfur to the sulfur carrier protein ThiS, forming ThiS-thiocarboxylate. This is a step in the synthesis of thiazole, in the thiamine biosynthesis pathway. The sulfur is donated as persulfide by IscS. The sequence is that of tRNA sulfurtransferase from Aeromonas hydrophila subsp. hydrophila (strain ATCC 7966 / DSM 30187 / BCRC 13018 / CCUG 14551 / JCM 1027 / KCTC 2358 / NCIMB 9240 / NCTC 8049).